The sequence spans 289 residues: tRNA-cytidine(32) 2-sulfurtransferase (289 aa).

The PP-loop motif signature appears at 49-54 (SGGKDS). The [4Fe-4S] cluster site is built by Cys-124, Cys-127, and Cys-215.

This sequence belongs to the TtcA family. In terms of assembly, homodimer. It depends on Mg(2+) as a cofactor. [4Fe-4S] cluster serves as cofactor.

Its subcellular location is the cytoplasm. It catalyses the reaction cytidine(32) in tRNA + S-sulfanyl-L-cysteinyl-[cysteine desulfurase] + AH2 + ATP = 2-thiocytidine(32) in tRNA + L-cysteinyl-[cysteine desulfurase] + A + AMP + diphosphate + H(+). It participates in tRNA modification. Its function is as follows. Catalyzes the ATP-dependent 2-thiolation of cytidine in position 32 of tRNA, to form 2-thiocytidine (s(2)C32). The sulfur atoms are provided by the cysteine/cysteine desulfurase (IscS) system. This Methylococcus capsulatus (strain ATCC 33009 / NCIMB 11132 / Bath) protein is tRNA-cytidine(32) 2-sulfurtransferase.